An 821-amino-acid chain; its full sequence is DNA replication licensing factor MCM6 (821 aa).

Met-1 is subject to N-acetylmethionine. Ser-13, Ser-219, and Ser-271 each carry phosphoserine. Thr-278 carries the phosphothreonine modification. The 208-residue stretch at 346 to 553 folds into the MCM domain; that stretch reads LYHNLCTSLF…TDYAIARRIV (208 aa). Residues His-359, Ser-399, Thr-400, Ala-401, Lys-402, Ser-403, and Asn-504 each contribute to the ATP site. Positions 528 to 531 match the Arginine finger motif; sequence SRFD. ADP-binding residues include Arg-619 and Glu-622. Lys-643 is modified (N6-acetyllysine). Residues 676-706 are disordered; sequence VDEGPDGINGHADSPAPASGINGHSEDMNQD. Phosphoserine occurs at positions 689 and 762. At Thr-791 the chain carries Phosphothreonine.

Belongs to the MCM family. Component of the MCM2-7 complex. The complex forms a toroidal hexameric ring with the proposed subunit order MCM2-MCM6-MCM4-MCM7-MCM3-MCM5. Component of the CMG helicase complex, a hexameric ring of related MCM2-7 subunits stabilized by CDC45 and the tetrameric GINS complex. May interact with MCM10. Interacts with TIPIN. Interacts with CDT1. Interacts with MCMBP. Interacts with DDI2. O-glycosylated (O-GlcNAcylated), in a cell cycle-dependent manner.

It localises to the nucleus. Its subcellular location is the chromosome. It catalyses the reaction ATP + H2O = ADP + phosphate + H(+). Its function is as follows. Acts as a component of the MCM2-7 complex (MCM complex) which is the replicative helicase essential for 'once per cell cycle' DNA replication initiation and elongation in eukaryotic cells. Core component of CDC45-MCM-GINS (CMG) helicase, the molecular machine that unwinds template DNA during replication, and around which the replisome is built. The active ATPase sites in the MCM2-7 ring are formed through the interaction surfaces of two neighboring subunits such that a critical structure of a conserved arginine finger motif is provided in trans relative to the ATP-binding site of the Walker A box of the adjacent subunit. The six ATPase active sites, however, are likely to contribute differentially to the complex helicase activity. In Bos taurus (Bovine), this protein is DNA replication licensing factor MCM6 (MCM6).